The following is a 550-amino-acid chain: CTP synthase (550 aa).

The segment at 1 to 272 is amidoligase domain; the sequence is MKTKFIFITG…DQKITSFLNL (272 aa). Ser14 contacts CTP. Position 14 (Ser14) interacts with UTP. 15 to 20 serves as a coordination point for ATP; the sequence is SLGKGL. L-glutamine is bound at residue Tyr55. Residue Asp72 coordinates ATP. Mg(2+) contacts are provided by Asp72 and Glu146. CTP-binding positions include 153 to 155, 193 to 198, and Lys229; these read DIE and KTKPTQ. UTP contacts are provided by residues 193 to 198 and Lys229; that span reads KTKPTQ. Residues 297-550 enclose the Glutamine amidotransferase type-1 domain; sequence TITIVGKYVG…IHAACNHNKQ (254 aa). Residue Gly359 coordinates L-glutamine. Cys386 functions as the Nucleophile; for glutamine hydrolysis in the catalytic mechanism. L-glutamine is bound by residues 387 to 390, Glu410, and Arg478; that span reads LGMQ. Residues His523 and Glu525 contribute to the active site.

It belongs to the CTP synthase family. Homotetramer.

It catalyses the reaction UTP + L-glutamine + ATP + H2O = CTP + L-glutamate + ADP + phosphate + 2 H(+). The enzyme catalyses L-glutamine + H2O = L-glutamate + NH4(+). It carries out the reaction UTP + NH4(+) + ATP = CTP + ADP + phosphate + 2 H(+). It participates in pyrimidine metabolism; CTP biosynthesis via de novo pathway; CTP from UDP: step 2/2. Allosterically activated by GTP, when glutamine is the substrate; GTP has no effect on the reaction when ammonia is the substrate. The allosteric effector GTP functions by stabilizing the protein conformation that binds the tetrahedral intermediate(s) formed during glutamine hydrolysis. Inhibited by the product CTP, via allosteric rather than competitive inhibition. Catalyzes the ATP-dependent amination of UTP to CTP with either L-glutamine or ammonia as the source of nitrogen. Regulates intracellular CTP levels through interactions with the four ribonucleotide triphosphates. The chain is CTP synthase from Lawsonia intracellularis (strain PHE/MN1-00).